Here is a 515-residue protein sequence, read N- to C-terminus: Bifunctional purine biosynthesis protein PurH (515 aa).

In terms of domain architecture, MGS-like spans 1 to 145 (MTKRALISVS…KNHASVTVVV (145 aa)).

It belongs to the PurH family.

The catalysed reaction is (6R)-10-formyltetrahydrofolate + 5-amino-1-(5-phospho-beta-D-ribosyl)imidazole-4-carboxamide = 5-formamido-1-(5-phospho-D-ribosyl)imidazole-4-carboxamide + (6S)-5,6,7,8-tetrahydrofolate. It carries out the reaction IMP + H2O = 5-formamido-1-(5-phospho-D-ribosyl)imidazole-4-carboxamide. The protein operates within purine metabolism; IMP biosynthesis via de novo pathway; 5-formamido-1-(5-phospho-D-ribosyl)imidazole-4-carboxamide from 5-amino-1-(5-phospho-D-ribosyl)imidazole-4-carboxamide (10-formyl THF route): step 1/1. Its pathway is purine metabolism; IMP biosynthesis via de novo pathway; IMP from 5-formamido-1-(5-phospho-D-ribosyl)imidazole-4-carboxamide: step 1/1. This chain is Bifunctional purine biosynthesis protein PurH, found in Streptococcus pyogenes serotype M3 (strain ATCC BAA-595 / MGAS315).